We begin with the raw amino-acid sequence, 114 residues long: Snake venom vascular endothelial growth factor (114 aa).

At Gln-1 the chain carries Pyrrolidone carboxylic acid. Disulfide bonds link Cys-14/Cys-56, Cys-45/Cys-91, and Cys-49/Cys-93. The segment at 92-114 (ECRPGSTVNNGKRKKNPKEGEPR) is disordered.

Belongs to the PDGF/VEGF growth factor family. Snake venom VEGF subfamily. As to quaternary structure, homodimer; disulfide-linked. Interacts with human VEGF receptor 1/FLT1. Interacts with human VEGF receptor 2/KDR. Expressed by venom gland.

It is found in the secreted. Snake venom vascular endothelial growth factor (svVEGF) that may contribute to venom dispersion and prey subjugation by inducing vascular permeability and hypotension. Induces an increase in capillary permeability after intradermal injection, as well as a drastic hypotensive effect after intravenous injection. The hypotension is mediated by nitric oxide (NO), which is produced by VEGF-activated endothelium NO synthase. Induces angiogenesis and migration of human vascular endothelial cells in vitro. Exhibits angiogenic activity by inducing human umbilical vein endothelial cells (HUVEC) to develop vessels in vitro. Induces cellular migration of HUVEC cells towards a wound in scratch assays, enhancing wound closure after 12 h by 49.5%. Induces dose-dependent leukocyte recruitment to the peritoneal cavity leading to increased vascular permeability in mice. The chain is Snake venom vascular endothelial growth factor from Crotalus durissus terrificus (South American rattlesnake).